Consider the following 163-residue polypeptide: Glutathione peroxidase 1 (163 aa).

Cys-36 is a catalytic residue.

It belongs to the glutathione peroxidase family.

Its subcellular location is the cytoplasm. The catalysed reaction is 2 glutathione + H2O2 = glutathione disulfide + 2 H2O. Functionally, may constitute a glutathione peroxidase-like protective system against oxidative stresses. The polypeptide is Glutathione peroxidase 1 (gpx-1) (Caenorhabditis elegans).